We begin with the raw amino-acid sequence, 330 residues long: Autoinducer 2 import system permease protein LsrD (330 aa).

Over 1–4 (MRIR) the chain is Cytoplasmic. Residues 5-25 (YGWELALAALLVIEIVAFGAI) traverse the membrane as a helical segment. Residues 26 to 42 (NPRMLDLNMLLFSTSDF) are Periplasmic-facing. Residues 43 to 63 (ICIGIVALPLTMVIVSGGIDI) form a helical membrane-spanning segment. The Cytoplasmic portion of the chain corresponds to 64–67 (SFGS). A run of 2 helical transmembrane segments spans residues 68–88 (TIGLCAIALGVLFQSGVPMPL) and 89–109 (AILLTLLLGALCGLINAGLII). The Cytoplasmic segment spans residues 110–115 (YTKVNP). Residues 116-136 (LVITLGTLYLFAGSALLLSGM) form a helical membrane-spanning segment. Residues 137 to 159 (AGATGYEGIGGFPMAFTDFANLD) lie on the Periplasmic side of the membrane. A helical transmembrane segment spans residues 160 to 180 (VLGLPVPLIIFLICLLVFWLW). Residues 181–209 (LHKTHAGRNVFLIGQSPRVAVYSAIPVNR) lie on the Cytoplasmic side of the membrane. Residues 210–230 (TLCALYAMTGLASAVAAVLLV) form a helical membrane-spanning segment. Topologically, residues 231–237 (SYFGSAR) are periplasmic. 2 consecutive transmembrane segments (helical) span residues 238-258 (SDLGASFLMPAITAVVLGGAN) and 259-279 (IYGGSGSIIGTAIAVLLVGYL). Topologically, residues 280-285 (QQGLQM) are periplasmic. Residues 286-306 (AGVPNQVSSALSGALLIVVVV) traverse the membrane as a helical segment. The Cytoplasmic segment spans residues 307–330 (GRSVSLHRQQIKEWLARRANNPLP).

The protein belongs to the binding-protein-dependent transport system permease family. AraH/RbsC subfamily. As to quaternary structure, the complex is composed of two ATP-binding proteins (LsrA), two transmembrane proteins (LsrC and LsrD) and a solute-binding protein (LsrB).

It is found in the cell inner membrane. Part of the ABC transporter complex LsrABCD involved in autoinducer 2 (AI-2) import. Probably responsible for the translocation of the substrate across the membrane. The sequence is that of Autoinducer 2 import system permease protein LsrD (lsrD) from Escherichia coli (strain SMS-3-5 / SECEC).